Here is a 1435-residue protein sequence, read N- to C-terminus: MALEMDSKNSNSAVTGDAAAATTKTNKAKENNNLAGSKKNQSQNLVNGNGTAADGPATKKKGKKNRNKSPPVSTDEAALSNGHVEEKKPEGDGDADADANANVVAVKDEKAEGGDEADAAELDTEDIDLDALHDAGIHVNISCPGSELLTVQLSSMELVQEIHQLLMDREESCHRTCFSLQLDNVTLDNFAELKTIEQLESGSTIKVVEEPYTMREARIHVRHVRDLLKNLDPADAYNGIECTSLTYLNTITQGDLLDKKKTRPDSVDCTPPDYVTPGVFEPPLLPLHPNFKNAKGPQALKVLTTSAWNPPPGPRKLHGDLMYLYVITMEEKRYHISACSRGFFINQSTDDTFNPKPDNPSYLSHSLIDLLSHISPSFRRAFQAIQKRRTLRHAFERVATPYQVYQWAAPNLEHTVDAIRAEDAFSSKLGYEEHIPGQTRDWNEELQTTRELPRKTLPERLLRERAIFKVHGDFVTAATRGAMAVIDGNVLAINPGEDSKMQMFIWNNIFFSLGFDVRDHYKELGGDYAAYVAPRYDLHGVRVYNAVDVEGLYTLGTVVIDYRGYRVTAQSIIPGILEREQEQSVVYGSIDFGKTVLSHPKYLELLRQAGKHLKILPHSVYNERDEPVELCSSVECKGIIGNDGRHYILDLLRTFPPDVNFLKLQEVKLSTELVEMGFPIEHRHKLCCLRQELLEAFVEDRYVNFIRIAAVHLQQLNAKKPEETQSEEKKQLPAIEEAEKENKENLNVNETPNEKEKDTPVETKNAEAMVNAIREAQSNVATSNEIQAAEVVKQACAAVGSMKEKEFDFRFNPDVFSPGIRHVDGEEGTSGSVAKQKLLVQDAAEFLVVKQIPAFVKEHLSHSSPPIDGQNLTESLHSHGINVRYLGKVIKTLGQMPRMDYLYRIAVMELIVRATKHIYYTYMQSTDPMHLSVAISHFLNCLLTNGPINPVVSNDEMHKKRGGNGGKHNKHKSSKGGKGQQQPAINQNGGSTTSSSSSANAYDWTLVTPRSLWQQIRKESKAYWDWDLDCDSMDSAMNKFGIMRICLLRAFCLKVGIQVLLREYNFDSKHKPTFGDDDIVNVFPVVKHISPRASDAYNFYTTGQAKIQQGLFKEGYELISEALNLLNNVFGAMHQENGSCLRMLARLSYLLGDAQDALAIQQRAVIMSERVNGIDNPSTILEYTHLSLYSFANGHVGMSLKLLYRARYLLVLTCGEDHPEVALIDSNISLILHALGEYELSLRFIEHALKLNLKYFGNKAMHVAVSYHLMARTQSCMGDFRSALNNEKETYSIYKSQLGEKHEKTRDSAECLRLLTQQAVLLQRKMNDIYSNGKLTSDLPPIHITPPSMGSVLEMLNTINGILFVQISQRDIVKVRSEIEKRMKANTDVNEAIKSMVAAANNNGESEVLAPQDNNKEQAATAQQLTNGDKVAVSS.

The interval 1–97 (MALEMDSKNS…KPEGDGDADA (97 aa)) is disordered. A compositionally biased stretch (low complexity) spans 18–35 (AAAATTKTNKAKENNNLA). Over residues 38-50 (KKNQSQNLVNGNG) the composition is skewed to polar residues. The segment covering 58 to 67 (TKKKGKKNRN) has biased composition (basic residues). Ser-266 bears the Phosphoserine mark. The region spanning 420–662 (RAEDAFSSKL…RTFPPDVNFL (243 aa)) is the Clu domain. Basic and acidic residues-rich tracts occupy residues 719-731 (KKPE…EKKQ) and 752-762 (PNEKEKDTPVE). 2 disordered regions span residues 719–762 (KKPE…TPVE) and 952–998 (VSND…SSSS). The segment covering 959–975 (KKRGGNGGKHNKHKSSK) has biased composition (basic residues). Residues 988 to 998 (NGGSTTSSSSS) show a composition bias toward low complexity. 3 TPR repeats span residues 1096-1129 (AYNF…LNNV), 1222-1255 (ALID…NLKY), and 1257-1290 (GNKA…EKET). A disordered region spans residues 1407–1435 (EVLAPQDNNKEQAATAQQLTNGDKVAVSS). The span at 1417–1435 (EQAATAQQLTNGDKVAVSS) shows a compositional bias: polar residues.

Belongs to the CLU family.

The protein resides in the cytoplasm. In terms of biological role, mRNA-binding protein involved in proper cytoplasmic distribution of mitochondria. The protein is Protein clueless of Drosophila persimilis (Fruit fly).